The following is a 290-amino-acid chain: ATP synthase gamma chain (290 aa).

It belongs to the ATPase gamma chain family. As to quaternary structure, F-type ATPases have 2 components, CF(1) - the catalytic core - and CF(0) - the membrane proton channel. CF(1) has five subunits: alpha(3), beta(3), gamma(1), delta(1), epsilon(1). CF(0) has three main subunits: a, b and c.

It localises to the cell inner membrane. Produces ATP from ADP in the presence of a proton gradient across the membrane. The gamma chain is believed to be important in regulating ATPase activity and the flow of protons through the CF(0) complex. In Amoebophilus asiaticus (strain 5a2), this protein is ATP synthase gamma chain.